The primary structure comprises 262 residues: Hemin import ATP-binding protein HmuV (262 aa).

Residues 5–242 form the ABC transporter domain; the sequence is LEARKAGFAT…ELIGAVFDVE (238 aa). 37–44 lines the ATP pocket; the sequence is GPNGAGKS.

Belongs to the ABC transporter superfamily. Heme (hemin) importer (TC 3.A.1.14.5) family. As to quaternary structure, the complex is composed of two ATP-binding proteins (HmuV), two transmembrane proteins (HmuU) and a solute-binding protein (HmuT).

The protein resides in the cell inner membrane. Functionally, part of the ABC transporter complex HmuTUV involved in hemin import. Responsible for energy coupling to the transport system. The chain is Hemin import ATP-binding protein HmuV from Rhodopseudomonas palustris (strain HaA2).